A 364-amino-acid chain; its full sequence is Anhydro-N-acetylmuramic acid kinase (364 aa).

11–18 (GSSLDGID) serves as a coordination point for ATP.

This sequence belongs to the anhydro-N-acetylmuramic acid kinase family.

The catalysed reaction is 1,6-anhydro-N-acetyl-beta-muramate + ATP + H2O = N-acetyl-D-muramate 6-phosphate + ADP + H(+). The protein operates within amino-sugar metabolism; 1,6-anhydro-N-acetylmuramate degradation. Its pathway is cell wall biogenesis; peptidoglycan recycling. Functionally, catalyzes the specific phosphorylation of 1,6-anhydro-N-acetylmuramic acid (anhMurNAc) with the simultaneous cleavage of the 1,6-anhydro ring, generating MurNAc-6-P. Is required for the utilization of anhMurNAc either imported from the medium or derived from its own cell wall murein, and thus plays a role in cell wall recycling. This is Anhydro-N-acetylmuramic acid kinase from Pseudomonas syringae pv. tomato (strain ATCC BAA-871 / DC3000).